Reading from the N-terminus, the 1128-residue chain is Apoptosis-stimulating of p53 protein 2 (1128 aa).

The tract at residues 85 to 120 is disordered; sequence PPNRDIVSGPRSQDPSVKRNGVKVPGEHRRKENGVN. The segment at 332–348 is interaction with APPBP1; the sequence is NLPQQAVSAPSRVAAVG. The interval 393–436 is disordered; sequence MRSGAASQSKGSKAHPASPDWNPSNADLLPSQGSSVPQSAGTAL. Over residues 413-433 the composition is skewed to polar residues; it reads WNPSNADLLPSQGSSVPQSAG. A phosphoserine mark is found at Ser479, Ser555, Ser568, Ser571, and Ser575. Disordered regions lie at residues 549–596 and 654–705; these read QARM…FPPA and NPQQ…LPFL. Residues 562-574 are compositionally biased toward polar residues; the sequence is GQDQVLSPASKQE. The span at 654-669 shows a compositional bias: polar residues; that stretch reads NPQQHPENIYSCSQGK. The segment covering 684-693 has biased composition (basic and acidic residues); it reads HESHENERIP. Ser697, Ser713, and Ser736 each carry phosphoserine. Disordered regions lie at residues 723–748, 802–824, and 870–907; these read KLSN…GPNI, SLVP…SDVP, and PPPP…KRTN. The SH3-binding signature appears at 866-875; that stretch reads YPPYPPPPYP. Positions 876–1128 are mediates interaction with APC2; sequence SGEPEVSEED…RIKPRQRSLA (253 aa). ANK repeat units follow at residues 958–987 and 991–1020; these read EGIT…NVNA and DGWT…AVFA. In terms of domain architecture, SH3 spans 1057-1119; it reads MNKGVIYALW…PRNLLGLYPR (63 aa).

The protein belongs to the ASPP family. Interacts with P53/TP53; the interaction promotes pro-apoptotic activity. Interacts with BCL2. Interacts with protein phosphatase 1. Interacts with RELA NF-kappa-B subunit. This interaction probably prevents the activation of apoptosis, possibly by preventing its interaction with p53/TP53. Interacts with APC2 and APPBP1. Interacts with DDX42 (via the C-terminus); the interaction is not inhibited by TP53BP2 ubiquitination and is independent of p53/TP53.

The protein localises to the cytoplasm. The protein resides in the perinuclear region. Its subcellular location is the nucleus. Its function is as follows. Regulator that plays a central role in regulation of apoptosis and cell growth via its interactions with proteins such as TP53. Regulates p53/TP53 by enhancing the DNA binding and transactivation function of p53/TP53 on the promoters of proapoptotic genes in vivo. Inhibits the ability of APPBP1 to conjugate NEDD8 to CUL1, and thereby decreases APPBP1 ability to induce apoptosis. Impedes cell cycle progression at G2/M. Its apoptosis-stimulating activity is inhibited by its interaction with DDX42. In Mus musculus (Mouse), this protein is Apoptosis-stimulating of p53 protein 2 (Tp53bp2).